The primary structure comprises 116 residues: Large ribosomal subunit protein uL18 (116 aa).

The protein belongs to the universal ribosomal protein uL18 family. In terms of assembly, part of the 50S ribosomal subunit; part of the 5S rRNA/L5/L18/L25 subcomplex. Contacts the 5S and 23S rRNAs.

This is one of the proteins that bind and probably mediate the attachment of the 5S RNA into the large ribosomal subunit, where it forms part of the central protuberance. This chain is Large ribosomal subunit protein uL18, found in Shewanella loihica (strain ATCC BAA-1088 / PV-4).